The primary structure comprises 258 residues: Glutathione S-transferase DHAR3, chloroplastic (258 aa).

A chloroplast-targeting transit peptide spans 1–42; sequence MISLRFQPSTTAGVLSASVSRAGFIKRCGSTKPGRVGRFVTM. Cysteine 52 carries the S-glutathionyl cysteine modification. The glutathione site is built by lysine 54 and aspartate 65. 2 residues coordinate L-ascorbate: lysine 54 and aspartate 65. The GST N-terminal domain occupies 56–129; it reads SITTPNKLGD…DVITQALEEK (74 aa). Cysteine 66 functions as the Nucleophile in the catalytic mechanism. Residues cysteine 66 and cysteine 69 are joined by a disulfide bond. Positions 66–71 match the Glutathione-binding motif; the sequence is CPFCQK. Positions 93, 106, 119, 205, and 252 each coordinate glutathione. One can recognise a GST C-terminal domain in the interval 130–258; sequence YPEPPLATPP…IAGWRPKVMG (129 aa). Lysine 255 contributes to the L-ascorbate binding site.

Belongs to the GST superfamily. DHAR family. Monomer. Interacts with TRX3. Post-translationally, partial S-glutathionylation and intramolecular disulfide bond formation between Cys-66 and Cys-69 in the presence of oxidized glutathione (GSSG). Could be reduced by TRX-dependent process.

Its subcellular location is the plastid. It localises to the chloroplast stroma. It carries out the reaction RX + glutathione = an S-substituted glutathione + a halide anion + H(+). It catalyses the reaction L-dehydroascorbate + 2 glutathione = glutathione disulfide + L-ascorbate. Functionally, displays a dual function. As a soluble protein, exhibits glutathione-dependent thiol transferase and dehydroascorbate (DHA) reductase activities. Key component of the ascorbate recycling system. Involved in the redox homeostasis, especially in scavenging of ROS under oxidative stresses. The chain is Glutathione S-transferase DHAR3, chloroplastic (DHAR3) from Arabidopsis thaliana (Mouse-ear cress).